Here is a 180-residue protein sequence, read N- to C-terminus: MSRKGKLPISLPNGVEVKVSNTEVAVKGPKGALTQKLIPGVNVNVEGNEVLVSLADEEAKLAHFHGLYRTLIHNMVVGTTEGFEKKLEMIGVGYRAAVQGDLLDLQLGFSHPCKLPIPKGLAVKVDKNTLITISGFDKHLVGQFAATVRSQRPPEPYQGKGIRYAGEFVRKKAGKAAAKK.

The protein belongs to the universal ribosomal protein uL6 family. In terms of assembly, part of the 50S ribosomal subunit.

Functionally, this protein binds to the 23S rRNA, and is important in its secondary structure. It is located near the subunit interface in the base of the L7/L12 stalk, and near the tRNA binding site of the peptidyltransferase center. This chain is Large ribosomal subunit protein uL6, found in Protochlamydia amoebophila (strain UWE25).